A 773-amino-acid chain; its full sequence is Cellobiose dehydrogenase (773 aa).

The first 18 residues, methionine 1–serine 18, serve as a signal peptide directing secretion. Position 19 is a pyrrolidone carboxylic acid (glutamine 19). The interval glutamine 19 to glycine 208 is heme domain. Residues methionine 83 and histidine 181 each coordinate heme. Positions leucine 203–glycine 227 are disordered. The span at proline 210–glycine 227 shows a compositional bias: low complexity. Residues tyrosine 235 to proline 773 are oxidoreductase. Aspartate 236–arginine 265 serves as a coordination point for FAD. Catalysis depends on histidine 707, which acts as the Proton acceptor.

In the C-terminal section; belongs to the GMC oxidoreductase family. FAD is required as a cofactor. Requires heme as cofactor.

The protein resides in the secreted. The enzyme catalyses D-cellobiose + A = D-cellobiono-1,5-lactone + AH2. Functionally, degrades both lignin and cellulose. Oxidizes cellobiose to cellobionolactone. The protein is Cellobiose dehydrogenase (CDH-1) of Phanerodontia chrysosporium (White-rot fungus).